The sequence spans 603 residues: Autophagy-related protein 13a (603 aa).

S248 is modified (phosphoserine). 2 disordered regions span residues P258–D477 and S498–R518. Over residues A301–L315 the composition is skewed to polar residues. The span at H320–G331 shows a compositional bias: basic and acidic residues. Polar residues-rich tracts occupy residues I371–S386 and S419–K437. The segment covering L453 to Q473 has biased composition (low complexity).

Belongs to the ATG13 family. Plant subfamily. In terms of assembly, interacts with ATG1A. Interacts with ATG11 and ATG101. Post-translationally, phosphorylated during nutrient starvation. Dephosphorylated in nutrient-rich conditions.

Its subcellular location is the cytoplasmic vesicle. It localises to the autophagosome. Involved in autophagy in a nutritional condition dependent manner. The ATG1-ATG13 protein kinase complex regulates downstream events required for autophagosome enclosure and/or vacuolar delivery. Becomes a target of autophagy under nutrient starvation. Connects autophagy to plant nutritional status. The polypeptide is Autophagy-related protein 13a (Arabidopsis thaliana (Mouse-ear cress)).